The following is a 1392-amino-acid chain: Leucine-rich PPR motif-containing protein, mitochondrial (1392 aa).

The transit peptide at 1–59 (MAALLRPARWLLGAAAAPRLPLSLRLPAGVPGRLSSVVRVAAVGSRPAAGERLSQARLY) directs the protein to the mitochondrion. PPR repeat units lie at residues 125 to 159 (LLRS…GVVY), 160 to 194 (DVSH…NIQP), 195 to 229 (NRVT…DLPI), 230 to 264 (TEAV…GIEP), 265 to 299 (GPDT…DHYF), 300 to 334 (MDRD…RRSI), 402 to 436 (HSSS…GFPI), 437 to 471 (RPHY…GVDP), 677 to 708 (VGSA…ESDM), 709 to 745 (VIGG…SAIL), 746 to 783 (DTAK…IKDA), 784 to 820 (TVLS…AKPS), 821 to 856 (SNIS…VLPR), and 953 to 987 (RDQM…NIIP). N6-acetyllysine is present on residues K151, K186, and K225. K291 carries the N6-acetyllysine modification. K462 bears the N6-acetyllysine mark. Position 749 is an N6-acetyllysine (K749). An RNA-binding region spans residues 931–1050 (ASNQVEALEK…NCKLKKSKDA (120 aa)). Phosphoserine is present on residues S1025, S1026, and S1028. PPR repeat units lie at residues 1030–1064 (GEDV…NVVF), 1065–1101 (SSET…GFTL), 1102–1136 (NDAA…KQVP), 1137–1175 (SQIA…LSKM), 1176–1210 (VFIN…QAIE), and 1315–1349 (NDKV…NLKL). Phosphoserine is present on S1137.

As to quaternary structure, component of mRNP complexes associated with HNRPA1. Component of the complex, at least composed of LRPPRC, BECN1 and BCL2; the interactions prevent BECN1 from forming an autophagy-inducing complex with PIK3C3. Interacts with CECR2, HEBP2, MAP1S and UXT. Interacts with PPARGC1A. Interacts with FOXO1. Interacts (via N-terminus) with EIF4E; the interaction promotes association of EIF4E with 4ESE-containing mRNAs. Interacts with exportin XPO1/CRM1; interacts both alone and in complex with EIF4E and 4ESE-containing mRNAs to form an EIF4E-dependent mRNA export complex. Interacts with importin IPO8; the interaction occurs when LRPPRC is in its RNA-free form and returns LRPPRC to the nucleus for further export rounds. Interacts with BECN1. Strongly expressed in heart, liver and kidney. Weakly expressed in brain, skeletal muscle and testes.

It localises to the mitochondrion. It is found in the nucleus. The protein localises to the nucleoplasm. The protein resides in the nucleus inner membrane. Its subcellular location is the nucleus outer membrane. May play a role in RNA metabolism in both nuclei and mitochondria. In the nucleus binds to HNRPA1-associated poly(A) mRNAs and is part of nmRNP complexes at late stages of mRNA maturation which are possibly associated with nuclear mRNA export. Positively modulates nuclear export of mRNAs containing the EIF4E sensitivity element (4ESE) by binding simultaneously to both EIF4E and the 4ESE and acting as a platform for assembly for the RNA export complex. Also binds to exportin XPO1/CRM1 to engage the nuclear pore and traffic the bound mRNAs to the cytoplasm. May bind mature mRNA in the nucleus outer membrane. In mitochondria binds to poly(A) mRNA. Plays a role in translation or stability of mitochondrially encoded cytochrome c oxidase (COX) subunits. May be involved in transcription regulation. Cooperates with PPARGC1A to regulate certain mitochondrially encoded genes and gluconeogenic genes and may regulate docking of PPARGC1A to transcription factors. Seems to be involved in the transcription regulation of the multidrug-related genes MDR1 and MVP. Part of a nuclear factor that binds to the invMED1 element of MDR1 and MVP gene promoters. Binds single-stranded DNA. Required for maintaining mitochondrial potential. Suppresses the initiation of basal levels of autophagy and mitophagy by sustaining BCL2 levels. The chain is Leucine-rich PPR motif-containing protein, mitochondrial (Lrpprc) from Mus musculus (Mouse).